Here is a 197-residue protein sequence, read N- to C-terminus: Adenylate kinase (197 aa).

Residue 16–21 participates in ATP binding; that stretch reads GAGKGT. Residues 36 to 65 form an NMP region; sequence STGDILRDHVARGTELGQQVKPILDAGHLV. Residues T37, R42, 63–65, 90–93, and Q97 contribute to the AMP site; these read HLV and GFPR. Residues 131 to 147 are LID; that stretch reads ERGNQAQARGEAVRSDD. R132 contacts ATP. AMP-binding residues include R144 and R155. G183 lines the ATP pocket.

It belongs to the adenylate kinase family. As to quaternary structure, monomer.

Its subcellular location is the cytoplasm. The catalysed reaction is AMP + ATP = 2 ADP. Its pathway is purine metabolism; AMP biosynthesis via salvage pathway; AMP from ADP: step 1/1. In terms of biological role, catalyzes the reversible transfer of the terminal phosphate group between ATP and AMP. Plays an important role in cellular energy homeostasis and in adenine nucleotide metabolism. This is Adenylate kinase from Deinococcus deserti (strain DSM 17065 / CIP 109153 / LMG 22923 / VCD115).